The chain runs to 338 residues: MYG1 protein YER156C (338 aa).

It belongs to the MYG1 family.

This Saccharomyces cerevisiae (strain ATCC 204508 / S288c) (Baker's yeast) protein is MYG1 protein YER156C.